Reading from the N-terminus, the 199-residue chain is V-type ATP synthase subunit E (199 aa).

The protein belongs to the V-ATPase E subunit family.

Produces ATP from ADP in the presence of a proton gradient across the membrane. The protein is V-type ATP synthase subunit E of Clostridium botulinum (strain Hall / ATCC 3502 / NCTC 13319 / Type A).